The following is a 124-amino-acid chain: Large ribosomal subunit protein bL12 (124 aa).

It belongs to the bacterial ribosomal protein bL12 family. Homodimer. Part of the ribosomal stalk of the 50S ribosomal subunit. Forms a multimeric L10(L12)X complex, where L10 forms an elongated spine to which 2 to 4 L12 dimers bind in a sequential fashion. Binds GTP-bound translation factors.

Forms part of the ribosomal stalk which helps the ribosome interact with GTP-bound translation factors. Is thus essential for accurate translation. In Vesicomyosocius okutanii subsp. Calyptogena okutanii (strain HA), this protein is Large ribosomal subunit protein bL12.